We begin with the raw amino-acid sequence, 120 residues long: U13-lycotoxin-Ls1a (120 aa).

The signal sequence occupies residues 1–16 (MKILFVLISILYAVYC). Residues 17 to 54 (FSSEEDVDSAYLANELEPVEDINSEQYAALEPKEEQGR) constitute a propeptide that is removed on maturation. 4 disulfide bridges follow: Cys56–Cys70, Cys63–Cys76, Cys69–Cys87, and Cys78–Cys85. An Agouti domain is found at 56–95 (CADMGQDCKDDCDCCLNIATCNCWFGRYFCSCTFGDYQTC).

This sequence belongs to the neurotoxin 05 (agouti) family. Post-translationally, contains 6 disulfide bonds. As to expression, expressed by the venom gland.

The protein localises to the secreted. The chain is U13-lycotoxin-Ls1a from Lycosa singoriensis (Wolf spider).